We begin with the raw amino-acid sequence, 88 residues long: RNA-binding protein Hfq (88 aa).

In terms of domain architecture, Sm spans 9–68; the sequence is DPFLNALRRERIPVSIYLVNGIKLQGQIESFDQFVILLKNTVNQMVYKHAISTVVPARAV. The interval 66–88 is disordered; the sequence is RAVSHHSGEQQRAPSDRPEKTED. Residues 71 to 88 show a composition bias toward basic and acidic residues; sequence HSGEQQRAPSDRPEKTED.

This sequence belongs to the Hfq family. In terms of assembly, homohexamer.

Its function is as follows. RNA chaperone that binds small regulatory RNA (sRNAs) and mRNAs to facilitate mRNA translational regulation in response to envelope stress, environmental stress and changes in metabolite concentrations. Also binds with high specificity to tRNAs. This is RNA-binding protein Hfq from Vibrio atlanticus (strain LGP32) (Vibrio splendidus (strain Mel32)).